The sequence spans 233 residues: Small ribosomal subunit protein uS2 (233 aa).

Belongs to the universal ribosomal protein uS2 family.

The protein is Small ribosomal subunit protein uS2 of Clostridium novyi (strain NT).